We begin with the raw amino-acid sequence, 165 residues long: uncharacterized protein (165 aa).

A helical transmembrane segment spans residues 4–26 (FVIGTMIALAGLLVGGGVGSYFT).

Its subcellular location is the membrane. This is an uncharacterized protein from Aquifex aeolicus (strain VF5).